Consider the following 106-residue polypeptide: UPF0213 protein KPN78578_35340 (106 aa).

The GIY-YIG domain maps to 13–88 (VCWFLYLIRT…KQLTKREKER (76 aa)).

It belongs to the UPF0213 family.

The polypeptide is UPF0213 protein KPN78578_35340 (Klebsiella pneumoniae subsp. pneumoniae (strain ATCC 700721 / MGH 78578)).